The chain runs to 176 residues: ATP-dependent protease subunit HslV (176 aa).

T2 is an active-site residue. Positions 157, 160, and 163 each coordinate Na(+).

The protein belongs to the peptidase T1B family. HslV subfamily. In terms of assembly, a double ring-shaped homohexamer of HslV is capped on each side by a ring-shaped HslU homohexamer. The assembly of the HslU/HslV complex is dependent on binding of ATP.

Its subcellular location is the cytoplasm. It catalyses the reaction ATP-dependent cleavage of peptide bonds with broad specificity.. Its activity is regulated as follows. Allosterically activated by HslU binding. In terms of biological role, protease subunit of a proteasome-like degradation complex believed to be a general protein degrading machinery. The polypeptide is ATP-dependent protease subunit HslV (Escherichia coli O139:H28 (strain E24377A / ETEC)).